Consider the following 430-residue polypeptide: Asparagine--tRNA ligase (430 aa).

This sequence belongs to the class-II aminoacyl-tRNA synthetase family. In terms of assembly, homodimer.

The protein localises to the cytoplasm. It carries out the reaction tRNA(Asn) + L-asparagine + ATP = L-asparaginyl-tRNA(Asn) + AMP + diphosphate + H(+). This Staphylococcus saprophyticus subsp. saprophyticus (strain ATCC 15305 / DSM 20229 / NCIMB 8711 / NCTC 7292 / S-41) protein is Asparagine--tRNA ligase.